Consider the following 212-residue polypeptide: Eukaryotic translation initiation factor 4E-1 (212 aa).

A disulfide bond links cysteine 125 and cysteine 129.

The protein belongs to the eukaryotic initiation factor 4E family. As to quaternary structure, EIF4F is a multi-subunit complex, the composition of which varies with external and internal environmental conditions. It is composed of at least EIF4A, EIF4E and EIF4G. EIF4E is also known to interact with other partners, including pgl-1. Interacts with ifet-1. Enriched in the germline from L3 larvae to adults; regions of the gonad undergoing spermatogenesis. Expressed in germ granules (P granules); when associated with pgl-1.

The protein localises to the cytoplasm. Recognizes and binds the 7-methylguanosine-containing mRNA cap during an early step in the initiation of protein synthesis and facilitates ribosome binding by inducing the unwinding of the mRNAs secondary structures. All 5 eIF4E proteins bind monomethyl cap structures. Only ife-1, ife-2 and ife-5 bind trimethyl cap structures which result from trans-splicing. Translation of trimethyl cap structure mRNAs may be regulated by intracellular redox state; disulfide bonds change the width and depth of the cap-binding cavity determining selectivity to mRNA caps. Required for progression through meiotic divisions during spermatogenesis and for the production of viable sperm. It is not required during oogenesis. In Caenorhabditis elegans, this protein is Eukaryotic translation initiation factor 4E-1 (ife-1).